Consider the following 372-residue polypeptide: Queuine tRNA-ribosyltransferase (372 aa).

Residue Asp-92 is the Proton acceptor of the active site. Residues 92–96 (DSGGF), Asp-146, Gln-188, and Gly-215 each bind substrate. The tract at residues 246-252 (GIGTLRE) is RNA binding. Residue Asp-265 is the Nucleophile of the active site. Positions 270–274 (TRLGR) are RNA binding; important for wobble base 34 recognition. Cys-303, Cys-305, Cys-308, and His-334 together coordinate Zn(2+).

This sequence belongs to the queuine tRNA-ribosyltransferase family. As to quaternary structure, homodimer. Within each dimer, one monomer is responsible for RNA recognition and catalysis, while the other monomer binds to the replacement base PreQ1. The cofactor is Zn(2+).

It catalyses the reaction 7-aminomethyl-7-carbaguanine + guanosine(34) in tRNA = 7-aminomethyl-7-carbaguanosine(34) in tRNA + guanine. It participates in tRNA modification; tRNA-queuosine biosynthesis. In terms of biological role, catalyzes the base-exchange of a guanine (G) residue with the queuine precursor 7-aminomethyl-7-deazaguanine (PreQ1) at position 34 (anticodon wobble position) in tRNAs with GU(N) anticodons (tRNA-Asp, -Asn, -His and -Tyr). Catalysis occurs through a double-displacement mechanism. The nucleophile active site attacks the C1' of nucleotide 34 to detach the guanine base from the RNA, forming a covalent enzyme-RNA intermediate. The proton acceptor active site deprotonates the incoming PreQ1, allowing a nucleophilic attack on the C1' of the ribose to form the product. After dissociation, two additional enzymatic reactions on the tRNA convert PreQ1 to queuine (Q), resulting in the hypermodified nucleoside queuosine (7-(((4,5-cis-dihydroxy-2-cyclopenten-1-yl)amino)methyl)-7-deazaguanosine). The sequence is that of Queuine tRNA-ribosyltransferase from Prochlorococcus marinus (strain MIT 9313).